The sequence spans 167 residues: Translationally-controlled tumor protein homolog (167 aa).

A TCTP domain is found at 1–167 (MIIFTDVISG…WKHGVSEDKI (167 aa)).

The protein belongs to the TCTP family.

The protein localises to the cytoplasm. The protein resides in the cytoskeleton. In terms of biological role, involved in protein synthesis. Involved in microtubule stabilization. This Debaryomyces hansenii (strain ATCC 36239 / CBS 767 / BCRC 21394 / JCM 1990 / NBRC 0083 / IGC 2968) (Yeast) protein is Translationally-controlled tumor protein homolog.